Here is a 457-residue protein sequence, read N- to C-terminus: Forkhead box protein N3 (457 aa).

Residues 1–24 (MGPVMPASKKAESSGISVSSGLSQ) form a disordered region. Over residues 13-23 (SSGISVSSGLS) the composition is skewed to low complexity. Serine 83, serine 85, and serine 97 each carry phosphoserine. Residues 86-109 (PVQDLDDDTPPSPAHSDMPYDARQ) form a disordered region. Residues 114–210 (KPPYSFSCLI…QALKKTPYHP (97 aa)) constitute a DNA-binding region (fork-head). Residues 285–422 (RTESEPPCGS…PESDDEEMKE (138 aa)) are disordered. Composition is skewed to low complexity over residues 308 to 331 (SSAK…SSSS) and 342 to 353 (GSQEGSEGSFQS). Residues 354–376 (HESHSEPEEEDRKPSPKEGKDAL) show a composition bias toward basic and acidic residues. Residues 384–396 (QHKKRQHFAKARK) show a composition bias toward basic residues. Serine 415 carries the phosphoserine modification.

In terms of assembly, interacts through its C-terminus with the C-terminus of SNW1/SKIP.

Its subcellular location is the nucleus. Acts as a transcriptional repressor. May be involved in DNA damage-inducible cell cycle arrests (checkpoints). The protein is Forkhead box protein N3 (Foxn3) of Mus musculus (Mouse).